A 553-amino-acid chain; its full sequence is Transcription factor IIIB 70 kDa subunit (553 aa).

A TFIIB-type zinc finger spans residues 6 to 39 (KQQKCKTCGHTQFDVNRYTAAGDVSCLRCGTVLE). 4 residues coordinate Zn(2+): Cys-10, Cys-13, Cys-31, and Cys-34. A run of 2 repeats spans residues 98–174 (IAAA…KMVK) and 193–272 (FVEK…EFKK). The interval 98 to 272 (IAAALKIPDY…LQRRLNEFKK (175 aa)) is interaction with TBP and with the Pol III subunit C34. An interaction with TBP region spans residues 281 to 553 (KSFREVENLE…KGLLGGNMGF (273 aa)). The segment at 473–523 (KQEADELTGNTSKSSSGNRRKRNKSSLPAELRKELGDIDLDEDGTPRSAAD) is disordered. Positions 480-489 (TGNTSKSSSG) are enriched in low complexity.

This sequence belongs to the TFIIB family. In terms of assembly, TFIIIB comprises the TATA-binding protein (TBP), the B-related factor (BRF) and a 70 kDa polypeptide.

The protein localises to the nucleus. Its function is as follows. General activator of RNA polymerase III transcription. Interacts with TBP. Binds to Pol III subunit C34 and to the TAU135 component of TFIIIC. In Candida albicans (strain SC5314 / ATCC MYA-2876) (Yeast), this protein is Transcription factor IIIB 70 kDa subunit (TDS4).